Consider the following 430-residue polypeptide: Enolase (430 aa).

Position 164 (glutamine 164) interacts with (2R)-2-phosphoglycerate. The Proton donor role is filled by glutamate 206. Aspartate 243, glutamate 286, and aspartate 313 together coordinate Mg(2+). Positions 338, 367, 368, and 389 each coordinate (2R)-2-phosphoglycerate. Lysine 338 functions as the Proton acceptor in the catalytic mechanism.

Belongs to the enolase family. In terms of assembly, component of the RNA degradosome, a multiprotein complex involved in RNA processing and mRNA degradation. Mg(2+) is required as a cofactor.

It is found in the cytoplasm. It localises to the secreted. The protein localises to the cell surface. It catalyses the reaction (2R)-2-phosphoglycerate = phosphoenolpyruvate + H2O. Its pathway is carbohydrate degradation; glycolysis; pyruvate from D-glyceraldehyde 3-phosphate: step 4/5. Catalyzes the reversible conversion of 2-phosphoglycerate (2-PG) into phosphoenolpyruvate (PEP). It is essential for the degradation of carbohydrates via glycolysis. In Dichelobacter nodosus (strain VCS1703A), this protein is Enolase.